The following is a 229-amino-acid chain: Platelet-activating factor acetylhydrolase IB subunit alpha2 (229 aa).

Active-site residues include S48, D193, and H196.

This sequence belongs to the 'GDSL' lipolytic enzyme family. Platelet-activating factor acetylhydrolase IB beta/gamma subunits subfamily. In terms of assembly, forms a catalytic dimer which is either homodimer (alpha2/alpha2 homodimer) or heterodimer with PAFAH1B3 (alpha2/alpha1 heterodimer). Component of the cytosolic (PAF-AH (I)) heterotetrameric enzyme, which is composed of PAFAH1B1 (beta), PAFAH1B2 (alpha2) and PAFAH1B3 (alpha1) subunits. The catalytic activity of the enzyme resides in the alpha1 (PAFAH1B3) and alpha2 (PAFAH1B2) subunits, whereas the beta subunit (PAFAH1B1) has regulatory activity. Trimer formation is not essential for the catalytic activity.

The protein localises to the cytoplasm. The catalysed reaction is a 1-O-alkyl-2-acetyl-sn-glycero-3-phosphocholine + H2O = a 1-O-alkyl-sn-glycero-3-phosphocholine + acetate + H(+). It catalyses the reaction 1-O-hexadecyl-2-acetyl-sn-glycero-3-phosphocholine + H2O = 1-O-hexadecyl-sn-glycero-3-phosphocholine + acetate + H(+). It carries out the reaction 1-O-hexadecyl-2-acetyl-sn-glycero-3-phosphate + H2O = 1-O-hexadecyl-sn-glycero-3-phosphate + acetate + H(+). The enzyme catalyses 1-O-hexadecyl-2-acetyl-sn-glycero-3-phosphoethanolamine + H2O = 1-O-hexadecyl-sn-glycero-3-phosphoethanolamine + acetate + H(+). Alpha2 catalytic subunit of the cytosolic type I platelet-activating factor (PAF) acetylhydrolase (PAF-AH (I)) heterotetrameric enzyme that catalyzes the hydrolyze of the acetyl group at the sn-2 position of PAF and its analogs and modulates the action of PAF. The polypeptide is Platelet-activating factor acetylhydrolase IB subunit alpha2 (PAFAH1B2) (Gallus gallus (Chicken)).